The primary structure comprises 124 residues: Small ribosomal subunit protein uS13 (124 aa).

Positions 97-124 (PVRGQRTKTNARTRKGPKRTIAGKKKAR) are disordered.

It belongs to the universal ribosomal protein uS13 family. As to quaternary structure, part of the 30S ribosomal subunit. Forms a loose heterodimer with protein S19. Forms two bridges to the 50S subunit in the 70S ribosome.

In terms of biological role, located at the top of the head of the 30S subunit, it contacts several helices of the 16S rRNA. In the 70S ribosome it contacts the 23S rRNA (bridge B1a) and protein L5 of the 50S subunit (bridge B1b), connecting the 2 subunits; these bridges are implicated in subunit movement. Contacts the tRNAs in the A and P-sites. In Mycolicibacterium gilvum (strain PYR-GCK) (Mycobacterium gilvum (strain PYR-GCK)), this protein is Small ribosomal subunit protein uS13.